A 98-amino-acid chain; its full sequence is uncharacterized protein (98 aa).

This is an uncharacterized protein from Dictyostelium discoideum (Social amoeba).